Here is a 480-residue protein sequence, read N- to C-terminus: Acetyl-coenzyme A carboxylase carboxyl transferase subunit beta, chloroplastic (480 aa).

Residues 25 to 48 form a disordered region; sequence TSSLGPIENASESKDPNINDTDKN. Positions 35 to 47 are enriched in basic and acidic residues; sequence SESKDPNINDTDK. The 265-residue stretch at 216–480 folds into the CoA carboxyltransferase N-terminal domain; sequence LWVQCENCYG…LHTFFPLNQN (265 aa). 4 residues coordinate Zn(2+): C220, C223, C239, and C242. The C4-type zinc-finger motif lies at 220 to 242; sequence CENCYGLNYKKFFKSKMNLCEQC.

Belongs to the AccD/PCCB family. In terms of assembly, acetyl-CoA carboxylase is a heterohexamer composed of biotin carboxyl carrier protein, biotin carboxylase and 2 subunits each of ACCase subunit alpha and ACCase plastid-coded subunit beta (accD). It depends on Zn(2+) as a cofactor.

Its subcellular location is the plastid. The protein localises to the chloroplast stroma. It catalyses the reaction N(6)-carboxybiotinyl-L-lysyl-[protein] + acetyl-CoA = N(6)-biotinyl-L-lysyl-[protein] + malonyl-CoA. The protein operates within lipid metabolism; malonyl-CoA biosynthesis; malonyl-CoA from acetyl-CoA: step 1/1. Functionally, component of the acetyl coenzyme A carboxylase (ACC) complex. Biotin carboxylase (BC) catalyzes the carboxylation of biotin on its carrier protein (BCCP) and then the CO(2) group is transferred by the transcarboxylase to acetyl-CoA to form malonyl-CoA. The polypeptide is Acetyl-coenzyme A carboxylase carboxyl transferase subunit beta, chloroplastic (Helianthus annuus (Common sunflower)).